The chain runs to 467 residues: Probable Xaa-Pro aminopeptidase pepP (467 aa).

Mn(2+) contacts are provided by D264, D275, E398, and E438.

The protein belongs to the peptidase M24B family. Mn(2+) serves as cofactor.

It carries out the reaction Release of any N-terminal amino acid, including proline, that is linked to proline, even from a dipeptide or tripeptide.. Catalyzes the removal of a penultimate prolyl residue from the N-termini of peptides. The polypeptide is Probable Xaa-Pro aminopeptidase pepP (pepP) (Neosartorya fischeri (strain ATCC 1020 / DSM 3700 / CBS 544.65 / FGSC A1164 / JCM 1740 / NRRL 181 / WB 181) (Aspergillus fischerianus)).